A 200-amino-acid polypeptide reads, in one-letter code: Large ribosomal subunit protein uL4 (200 aa).

Positions 43–71 (RAQKTRAEVSGSGKKPWRQKGTGRARSGD) are disordered.

Belongs to the universal ribosomal protein uL4 family. Part of the 50S ribosomal subunit.

One of the primary rRNA binding proteins, this protein initially binds near the 5'-end of the 23S rRNA. It is important during the early stages of 50S assembly. It makes multiple contacts with different domains of the 23S rRNA in the assembled 50S subunit and ribosome. In terms of biological role, forms part of the polypeptide exit tunnel. The sequence is that of Large ribosomal subunit protein uL4 from Histophilus somni (strain 2336) (Haemophilus somnus).